The primary structure comprises 366 residues: Anhydro-N-acetylmuramic acid kinase (366 aa).

Position 12–19 (12–19 (GTSLDGID)) interacts with ATP.

It belongs to the anhydro-N-acetylmuramic acid kinase family.

It carries out the reaction 1,6-anhydro-N-acetyl-beta-muramate + ATP + H2O = N-acetyl-D-muramate 6-phosphate + ADP + H(+). It participates in amino-sugar metabolism; 1,6-anhydro-N-acetylmuramate degradation. It functions in the pathway cell wall biogenesis; peptidoglycan recycling. In terms of biological role, catalyzes the specific phosphorylation of 1,6-anhydro-N-acetylmuramic acid (anhMurNAc) with the simultaneous cleavage of the 1,6-anhydro ring, generating MurNAc-6-P. Is required for the utilization of anhMurNAc either imported from the medium or derived from its own cell wall murein, and thus plays a role in cell wall recycling. This is Anhydro-N-acetylmuramic acid kinase from Nitrosospira multiformis (strain ATCC 25196 / NCIMB 11849 / C 71).